The chain runs to 282 residues: Bifunctional protein FolD (282 aa).

163-165 (GRS) is an NADP(+) binding site.

This sequence belongs to the tetrahydrofolate dehydrogenase/cyclohydrolase family. As to quaternary structure, homodimer.

It catalyses the reaction (6R)-5,10-methylene-5,6,7,8-tetrahydrofolate + NADP(+) = (6R)-5,10-methenyltetrahydrofolate + NADPH. The enzyme catalyses (6R)-5,10-methenyltetrahydrofolate + H2O = (6R)-10-formyltetrahydrofolate + H(+). Its pathway is one-carbon metabolism; tetrahydrofolate interconversion. Its function is as follows. Catalyzes the oxidation of 5,10-methylenetetrahydrofolate to 5,10-methenyltetrahydrofolate and then the hydrolysis of 5,10-methenyltetrahydrofolate to 10-formyltetrahydrofolate. The chain is Bifunctional protein FolD from Leuconostoc citreum (strain KM20).